The sequence spans 1038 residues: Protein argonaute 1D (1038 aa).

2 disordered regions span residues 1 to 58 and 110 to 134; these read MGSR…GAAP and APHEPPANVSSPEAASPEASSPRSL. Gly residues-rich tracts occupy residues 18-29 and 43-52; these read RGGGRGGGGRGR and GHGGRGGAGY. The span at 115-134 shows a compositional bias: low complexity; that stretch reads PANVSSPEAASPEASSPRSL. The 114-residue stretch at 380-493 folds into the PAZ domain; the sequence is PVIDFVIQLL…LPMEVCKIVE (114 aa). The 322-residue stretch at 669 to 990 folds into the Piwi domain; the sequence is LLIGLLPDNN…AAFRARFYME (322 aa). The segment at 992–1021 is disordered; sequence DSSDSGSMASGRGGGSSTSRSTRAAGGGAV.

It belongs to the argonaute family. Ago subfamily.

In terms of biological role, probably involved in the RNA silencing pathway. May bind to short RNAs such as microRNAs (miRNAs) or short interfering RNAs (siRNAs), and represses the translation of mRNAs which are complementary to them. This chain is Protein argonaute 1D (AGO1D), found in Oryza sativa subsp. japonica (Rice).